A 215-amino-acid chain; its full sequence is UPF0502 protein YceH (215 aa).

The protein belongs to the UPF0502 family.

The chain is UPF0502 protein YceH from Salmonella paratyphi B (strain ATCC BAA-1250 / SPB7).